A 207-amino-acid chain; its full sequence is Ribonuclease HII (207 aa).

The 190-residue stretch at 12 to 201 (DLVAGVDEVG…VRAAWEAREG (190 aa)) folds into the RNase H type-2 domain. The a divalent metal cation site is built by Asp18, Glu19, and Asp110.

This sequence belongs to the RNase HII family. It depends on Mn(2+) as a cofactor. Mg(2+) is required as a cofactor.

It is found in the cytoplasm. The enzyme catalyses Endonucleolytic cleavage to 5'-phosphomonoester.. In terms of biological role, endonuclease that specifically degrades the RNA of RNA-DNA hybrids. The polypeptide is Ribonuclease HII (Pseudomonas putida (strain W619)).